We begin with the raw amino-acid sequence, 375 residues long: 2-heptyl-3-hydroxy-4(1H)-quinolone synthase (375 aa).

The protein belongs to the 3-hydroxybenzoate 6-hydroxylase family.

It carries out the reaction 2-heptyl-4(1H)-quinolone + NADH + O2 + H(+) = 2-heptyl-3-hydroxy-4(1H)-quinolone + NAD(+) + H2O. Involved in the degradation pathway of the Pseudomonas aeruginosa quorum sensing signal molecule HHQ (2-heptyl-4(1H)-quinolone) to anthranilate. Catalyzes the hydroxylation of HHQ to PQS (2-heptyl-3-hydroxy-4(1H)-quinolone). This chain is 2-heptyl-3-hydroxy-4(1H)-quinolone synthase, found in Mycobacteroides abscessus (strain ATCC 19977 / DSM 44196 / CCUG 20993 / CIP 104536 / JCM 13569 / NCTC 13031 / TMC 1543 / L948) (Mycobacterium abscessus).